We begin with the raw amino-acid sequence, 486 residues long: uncharacterized protein (486 aa).

Residues 18–38 (TLLQLFVFTVICVFVLSGLAI) form a helical membrane-spanning segment. Basic and acidic residues predominate over residues 62-79 (DRQKQMEKQQDSGEKRSF). Disordered stretches follow at residues 62 to 82 (DRQKQMEKQQDSGEKRSFEST) and 117 to 147 (IESSSSSDSSSSSSSSNAKNSQGGGQGGPQM). Positions 119–132 (SSSSSDSSSSSSSS) are enriched in low complexity. 3 helical membrane-spanning segments follow: residues 324 to 344 (VVYLVSVAGAVILGLIVMMSI), 365 to 385 (IGQFLTEILIVAVIAIGLASV), and 451 to 471 (MLILGGIGILIAIIATLLPSI).

This sequence belongs to the ABC-4 integral membrane protein family.

It is found in the cell membrane. This is an uncharacterized protein from Bacillus subtilis (strain 168).